The primary structure comprises 399 residues: Elongation factor Tu (399 aa).

The tr-type G domain occupies 10–209; the sequence is KPHVNIGTIG…AVDSYIPTPT (200 aa). The G1 stretch occupies residues 19-26; sequence GHVDHGKT. 19–26 lines the GTP pocket; sequence GHVDHGKT. A Mg(2+)-binding site is contributed by threonine 26. A G2 region spans residues 60–64; it reads GITIA. Residues 81–84 form a G3 region; sequence DCPG. GTP-binding positions include 81–85 and 136–139; these read DCPGH and NKAD. The segment at 136-139 is G4; sequence NKAD. The interval 174-176 is G5; the sequence is SAL.

Belongs to the TRAFAC class translation factor GTPase superfamily. Classic translation factor GTPase family. EF-Tu/EF-1A subfamily. Monomer.

It is found in the cytoplasm. The enzyme catalyses GTP + H2O = GDP + phosphate + H(+). In terms of biological role, GTP hydrolase that promotes the GTP-dependent binding of aminoacyl-tRNA to the A-site of ribosomes during protein biosynthesis. The polypeptide is Elongation factor Tu (Campylobacter jejuni (strain RM1221)).